A 373-amino-acid polypeptide reads, in one-letter code: MTSTPIIPADLLPADGRFGCGPSKVRPEQLQSLVEVGSSVFGTSHRQKPVKDVVASVRSGLADLFSLPEGYEVVLGNGGTTAFWDAAAFGLIREKSLHLTNGEFSSKFASVAKNNPFIGDPIVVSADPGSAPEPVSDPSVDLIGWAHNETSTGVAIPVSRPAGSENALIAIDATSGAGGLPVNVADADVYYFAPQKCFAADGGLWIALMSPKALERVAEIKDSGRWTPDFLSLPIAVDNSSKDQTYNTPAVATLLLLANQIDWLNGKGGLDWATSRTADSSSRLYQWAEASEYATPFVTDPAHRSQVVGTIDFDDKIDAAQVAKILRANGVVDTEPYRKLGRNQLRVGMFPAIDPEDVSQLTKSIDWVVSQLG.

Arg-46 contributes to the L-glutamate binding site. 4 residues coordinate pyridoxal 5'-phosphate: Phe-104, Thr-150, Asp-172, and Gln-195. Lys-196 is subject to N6-(pyridoxal phosphate)lysine. 247 to 248 (NT) lines the pyridoxal 5'-phosphate pocket.

The protein belongs to the class-V pyridoxal-phosphate-dependent aminotransferase family. SerC subfamily. As to quaternary structure, homodimer. It depends on pyridoxal 5'-phosphate as a cofactor.

It localises to the cytoplasm. It catalyses the reaction O-phospho-L-serine + 2-oxoglutarate = 3-phosphooxypyruvate + L-glutamate. The catalysed reaction is 4-(phosphooxy)-L-threonine + 2-oxoglutarate = (R)-3-hydroxy-2-oxo-4-phosphooxybutanoate + L-glutamate. It functions in the pathway amino-acid biosynthesis; L-serine biosynthesis; L-serine from 3-phospho-D-glycerate: step 2/3. Its pathway is cofactor biosynthesis; pyridoxine 5'-phosphate biosynthesis; pyridoxine 5'-phosphate from D-erythrose 4-phosphate: step 3/5. Catalyzes the reversible conversion of 3-phosphohydroxypyruvate to phosphoserine and of 3-hydroxy-2-oxo-4-phosphonooxybutanoate to phosphohydroxythreonine. This is Phosphoserine aminotransferase from Rhodococcus opacus (strain B4).